Here is a 239-residue protein sequence, read N- to C-terminus: Glutathione S-transferase verG (239 aa).

Positions Lys18–Arg101 constitute a GST N-terminal domain. A GST C-terminal domain is found at Asn107–Ile237.

The protein belongs to the GST superfamily.

It catalyses the reaction RX + glutathione = an S-substituted glutathione + a halide anion + H(+). It functions in the pathway mycotoxin biosynthesis. Glutathione S-transferase; part of the gene cluster that mediates the biosynthesis of 11'-deoxyverticillin A, one of the dimeric epipolythiodioxopiperazines (ETPs) from the verticillin family that act as mycotoxins. 11'-deoxyverticillin A is required for normal conidiation. The nonribosomal peptide synthetase verP is speculated to be responsible for condensation of amino acids to form the carbon skeleton of verticillin, whereas the cluster-specific tailoring enzymes are involved in further modifications leading to the production of 11'-deoxyverticillin A. In Clonostachys rogersoniana, this protein is Glutathione S-transferase verG.